Reading from the N-terminus, the 243-residue chain is 1-(5-phosphoribosyl)-5-[(5-phosphoribosylamino)methylideneamino] imidazole-4-carboxamide isomerase (243 aa).

The active-site Proton acceptor is the D8. The active-site Proton donor is the D130.

This sequence belongs to the HisA/HisF family.

It localises to the cytoplasm. It catalyses the reaction 1-(5-phospho-beta-D-ribosyl)-5-[(5-phospho-beta-D-ribosylamino)methylideneamino]imidazole-4-carboxamide = 5-[(5-phospho-1-deoxy-D-ribulos-1-ylimino)methylamino]-1-(5-phospho-beta-D-ribosyl)imidazole-4-carboxamide. It functions in the pathway amino-acid biosynthesis; L-histidine biosynthesis; L-histidine from 5-phospho-alpha-D-ribose 1-diphosphate: step 4/9. The protein is 1-(5-phosphoribosyl)-5-[(5-phosphoribosylamino)methylideneamino] imidazole-4-carboxamide isomerase of Acinetobacter baumannii (strain AB307-0294).